The chain runs to 148 residues: SsrA-binding protein (148 aa).

Positions 119-148 (AKGKKQHDKRQSMKEADWKREKQRLIKHTR) are disordered. Residues 127–142 (KRQSMKEADWKREKQR) are compositionally biased toward basic and acidic residues.

The protein belongs to the SmpB family.

The protein localises to the cytoplasm. Its function is as follows. Required for rescue of stalled ribosomes mediated by trans-translation. Binds to transfer-messenger RNA (tmRNA), required for stable association of tmRNA with ribosomes. tmRNA and SmpB together mimic tRNA shape, replacing the anticodon stem-loop with SmpB. tmRNA is encoded by the ssrA gene; the 2 termini fold to resemble tRNA(Ala) and it encodes a 'tag peptide', a short internal open reading frame. During trans-translation Ala-aminoacylated tmRNA acts like a tRNA, entering the A-site of stalled ribosomes, displacing the stalled mRNA. The ribosome then switches to translate the ORF on the tmRNA; the nascent peptide is terminated with the 'tag peptide' encoded by the tmRNA and targeted for degradation. The ribosome is freed to recommence translation, which seems to be the essential function of trans-translation. This chain is SsrA-binding protein, found in Neisseria gonorrhoeae (strain ATCC 700825 / FA 1090).